A 277-amino-acid polypeptide reads, in one-letter code: MTFSGHTARKRFGQHWLINERVLDRIVEAAELQDGDRVLEVGPGRGALTERLLASAAAAIHAVELDRDLVAGLQQTFASHPKFSLQEGDVLSVPLELSGGVPANKVVANIPYNITGPLLDRLIGRLDRPVDFSYQRLVLLVQHEVAQRIRARPGHSNFSALSVRMQLLGRCSHVCPVPPRCFQPPPKVQSEVICIDPFPPERRPTAALSRGVERLLKMAFLSRRKMLRNTLAPVGSTDLLQSLAEEAGISLQQRPQDVAPEAWVALAKGLNQVDSVA.

Positions 15, 17, 42, 64, 89, and 109 each coordinate S-adenosyl-L-methionine.

Belongs to the class I-like SAM-binding methyltransferase superfamily. rRNA adenine N(6)-methyltransferase family. RsmA subfamily.

It localises to the cytoplasm. It catalyses the reaction adenosine(1518)/adenosine(1519) in 16S rRNA + 4 S-adenosyl-L-methionine = N(6)-dimethyladenosine(1518)/N(6)-dimethyladenosine(1519) in 16S rRNA + 4 S-adenosyl-L-homocysteine + 4 H(+). Specifically dimethylates two adjacent adenosines (A1518 and A1519) in the loop of a conserved hairpin near the 3'-end of 16S rRNA in the 30S particle. May play a critical role in biogenesis of 30S subunits. The chain is Ribosomal RNA small subunit methyltransferase A from Synechococcus sp. (strain CC9311).